The primary structure comprises 357 residues: MPIYNFSAGPAVLPQPVITQIQAELPSFRDSGMSILEISHRSDLFAQVLQDAEQDLRDLMAIPDNYHVLFFQGGGTLQFTAAPLNLAPHHRIGLLDSGHWAQRAADEAKRVGTKVTILGSSAANHFNQLPTVVQPIDQSLDYIHLTTNNTIEGTMMTRLPVTGQVPLVADMSSNFLGEPYQVSDFGLIFAGAQKNLGPAGLTIVIVRDDLIGQVANLPSMLDYQLFAAKDSMFNTPPVFAIYAAGLVLKWLKAQGGLSTMTARNHAKAALLYDFLDQSQLFTNPVKTSDRSTMNVPFVTGQADLDAAVIQGAREHGLLNLKGHRLVGGMRASLYNAMPLAGVQALVDYLAAFEAHHR.

R41 is a binding site for L-glutamate. Residues 75–76 (GT), W100, T150, D170, and Q193 contribute to the pyridoxal 5'-phosphate site. K194 bears the N6-(pyridoxal phosphate)lysine mark. 234-235 (NT) lines the pyridoxal 5'-phosphate pocket.

The protein belongs to the class-V pyridoxal-phosphate-dependent aminotransferase family. SerC subfamily. Homodimer. Requires pyridoxal 5'-phosphate as cofactor.

Its subcellular location is the cytoplasm. It carries out the reaction O-phospho-L-serine + 2-oxoglutarate = 3-phosphooxypyruvate + L-glutamate. The enzyme catalyses 4-(phosphooxy)-L-threonine + 2-oxoglutarate = (R)-3-hydroxy-2-oxo-4-phosphooxybutanoate + L-glutamate. The protein operates within amino-acid biosynthesis; L-serine biosynthesis; L-serine from 3-phospho-D-glycerate: step 2/3. In terms of biological role, catalyzes the reversible conversion of 3-phosphohydroxypyruvate to phosphoserine and of 3-hydroxy-2-oxo-4-phosphonooxybutanoate to phosphohydroxythreonine. This is Phosphoserine aminotransferase from Lactiplantibacillus plantarum (strain ATCC BAA-793 / NCIMB 8826 / WCFS1) (Lactobacillus plantarum).